Reading from the N-terminus, the 88-residue chain is Small ribosomal subunit protein uS17 (88 aa).

Belongs to the universal ribosomal protein uS17 family. Part of the 30S ribosomal subunit.

Functionally, one of the primary rRNA binding proteins, it binds specifically to the 5'-end of 16S ribosomal RNA. The chain is Small ribosomal subunit protein uS17 from Xylella fastidiosa (strain M23).